We begin with the raw amino-acid sequence, 428 residues long: Synaptotagmin-1 (428 aa).

Residues 1-67 (MDSLLARVKR…KDKLINEIEN (67 aa)) lie on the Vesicular side of the membrane. The interval 16 to 50 (ALNPAQEGVTGGPDAAGLPDVSTSSPGGGGAGDKL) is disordered. The chain crosses the membrane as a helical span at residues 68–92 (LPIWAIVLIIAGSLLFLVCCVYCVC). The Cytoplasmic portion of the chain corresponds to 93–428 (RRSCRKRKKK…HTLQEVPEKN (336 aa)). S123 carries the post-translational modification Phosphoserine; by PRKC2. Residues 147–395 (STKSEVKLGK…PIGRCVLGCN (249 aa)) are phospholipid binding. 2 C2 domains span residues 153-272 (KLGK…EDWK) and 286-419 (KLGD…AQWH). Residues D184, D190, D242, F243, D244, S247, K248, D250, D317, D323, D377, and D379 each contribute to the Ca(2+) site.

It belongs to the synaptotagmin family. Binds SNAP25. Isoform 3 binds SNAP25 with higher affinity. It depends on Ca(2+) as a cofactor.

It localises to the cytoplasmic vesicle. It is found in the secretory vesicle. Its subcellular location is the synaptic vesicle membrane. The protein localises to the synapse. Its function is as follows. Acts as inhibitor of neurotransmitter release. Overexpression leads to a decrease in the amplitude of the excitatory postsynaptic potential in dissected cholinergic and glutaminergic neurons while depletion with antisense oligonucleotides leads to an increase. Overexpression of isoform 1 blocks the reversal of synaptic depression by serotonin in sensory neurons. This chain is Synaptotagmin-1 (SYT1), found in Aplysia californica (California sea hare).